Reading from the N-terminus, the 160-residue chain is Cytochrome b6-f complex subunit 4 (160 aa).

The next 3 helical transmembrane spans lie at 36–56, 95–115, and 131–151; these read LLYVFPVCILGTFACCIGLAV, LLGVLAMARVPAGLITVPFIE, and LVFILGFFTAVWLGIGACLPI.

It belongs to the cytochrome b family. PetD subfamily. The 4 large subunits of the cytochrome b6-f complex are cytochrome b6, subunit IV (17 kDa polypeptide, petD), cytochrome f and the Rieske protein, while the 4 small subunits are petG, petL, petM and petN. The complex functions as a dimer.

It is found in the plastid. It localises to the chloroplast thylakoid membrane. In terms of biological role, component of the cytochrome b6-f complex, which mediates electron transfer between photosystem II (PSII) and photosystem I (PSI), cyclic electron flow around PSI, and state transitions. The protein is Cytochrome b6-f complex subunit 4 of Trieres chinensis (Marine centric diatom).